The primary structure comprises 442 residues: ATP-dependent protease ATPase subunit HslU (442 aa).

ATP is bound by residues isoleucine 18 and 60–65 (GVGKTE). The tract at residues 136-157 (LPKPKNDWESTETDSSSNTRQV) is disordered. The ATP site is built by aspartate 255, glutamate 320, and arginine 392.

The protein belongs to the ClpX chaperone family. HslU subfamily. In terms of assembly, a double ring-shaped homohexamer of HslV is capped on each side by a ring-shaped HslU homohexamer. The assembly of the HslU/HslV complex is dependent on binding of ATP.

The protein resides in the cytoplasm. In terms of biological role, ATPase subunit of a proteasome-like degradation complex; this subunit has chaperone activity. The binding of ATP and its subsequent hydrolysis by HslU are essential for unfolding of protein substrates subsequently hydrolyzed by HslV. HslU recognizes the N-terminal part of its protein substrates and unfolds these before they are guided to HslV for hydrolysis. The polypeptide is ATP-dependent protease ATPase subunit HslU (Shewanella baltica (strain OS185)).